Reading from the N-terminus, the 309-residue chain is Diadenylate cyclase (309 aa).

One can recognise a DAC domain in the interval 144–301; the sequence is TITLYELFET…DGKIVFETDP (158 aa).

Belongs to the adenylate cyclase family. DacZ subfamily. Requires Mn(2+) as cofactor.

The enzyme catalyses 2 ATP = 3',3'-c-di-AMP + 2 diphosphate. Its function is as follows. Diadenylate cyclase that catalyzes the condensation of 2 ATP molecules into cyclic di-AMP (c-di-AMP). c-di-AMP is a second messenger for intracellular signal transduction involved in the control of important regulatory processes such as osmoregulation. The chain is Diadenylate cyclase from Methanocaldococcus jannaschii (strain ATCC 43067 / DSM 2661 / JAL-1 / JCM 10045 / NBRC 100440) (Methanococcus jannaschii).